Consider the following 569-residue polypeptide: MRLHRLRARLNAVAFGLLLLLVHGQGPEIVQPEVDTTLGRVRGRQVGVKGTDRLVNVFLGIPFAQPPLGPDRFSAPHPAQPWEGVRDASAAPPMCLQDVESMNNSRFVLNGKQQIFSVSEDCLVLNIYSPAEATAGAGRPVMVWVHGGALITGAATSYDGSALAAYGDVVVVTVQYRLGVLGFFSTGDEHAPGNQGFLDVVAALRWVQGNITPFGGDLNCVTVFGGSAGGSIVSGLVLSPMAAGLFHRAITQSGVITTPGIIESHPWPLAQKITNTLACSSSSPAEMVQCLRQKEGEELVLSKKLKSTIYPLTVDGTVFPKSPKELLKEKPFHSVPFLMGVNNHEFSWLIPRGWGLLDTMEQMSREDMLAISTPVLTSLDVPPEMMPTVIDEYLGSNSDAQAKCLAFQEFMGDVFINVPTVSFSRYLRDSGSPVFFYEFQHRPSSFAKIKPAWVKADHAAEGAFVFGGPFLMDESSRLAFPEATEEEKQLSLTMMAQWTHFARTGDPNSKGLPPWPRFNQAEQYLEINPVPRAGQKFRETRMQFWSETLPSKIQQWHQKQKNRKAQEDL.

The first 24 residues, 1–24, serve as a signal peptide directing secretion; the sequence is MRLHRLRARLNAVAFGLLLLLVHG. Cysteines 95 and 122 form a disulfide. Residue Asn-103 is glycosylated (N-linked (GlcNAc...) asparagine). The active-site Acyl-ester intermediate is Ser-227. Cys-279 and Cys-290 are oxidised to a cystine. Residues Glu-345 and His-458 each act as charge relay system in the active site. A Prevents secretion from ER motif is present at residues 566–569; it reads QEDL.

The protein belongs to the type-B carboxylesterase/lipase family. Post-translationally, N-glycosylated.

It is found in the endoplasmic reticulum lumen. It carries out the reaction a carboxylic ester + H2O = an alcohol + a carboxylate + H(+). Its function is as follows. Involved in the detoxification of xenobiotics and in the activation of ester and amide prodrugs. The sequence is that of Carboxylesterase 3 (CES3) from Pongo abelii (Sumatran orangutan).